We begin with the raw amino-acid sequence, 902 residues long: AAA+ ATPase ClpV1 (902 aa).

The region spanning 10-151 (FGKLNSLAYK…KVEALTERFD (142 aa)) is the Clp R domain. 2 repeat regions span residues 13 to 78 (LNSL…LDRL) and 88 to 151 (LSSH…ERFD). An ATP-binding site is contributed by 237-244 (GEAGVGKT). The stretch at 441–559 (AEVDDSRRRI…AQLSALQGEE (119 aa)) forms a coiled coil. ATP is bound at residue 640–647 (GTSGVGKT).

This sequence belongs to the ClpA/ClpB family. Interacts with TagJ.

The protein resides in the cytoplasm. In terms of biological role, component of the H1 type VI (H1-T6SS) secretion system that plays a role in the release of toxins targeting both eukaryotic and prokaryotic species. Acts as an AAA(+) ATPase that disassembles the contracted sheath, which resets the systems for reassembly of an extended sheath that is ready to fire again. This chain is AAA+ ATPase ClpV1 (clpV1), found in Pseudomonas aeruginosa (strain ATCC 15692 / DSM 22644 / CIP 104116 / JCM 14847 / LMG 12228 / 1C / PRS 101 / PAO1).